Here is a 295-residue protein sequence, read N- to C-terminus: MVSELELKEIIGKVLKEMAVEGKTEGQAVTETKKTSESHIEDGIIDDITKEDLREIVELKNATNKEEFLKYKRKTPARLGISRAGSRYTTHTMLRLRADHAAAQDAVLSSVNEDFLKANNLFIVKSRCEDKDQYITRPDLGRRLDEESVKTLKEKCVQNPTVQVFVADGLSSTAIEANIEDCLPALLNGLKSYGISVGTPFFAKLARVGLADDVSEVLGAEVTCVLIGERPGLATAESMSAYITYKGYVGIPEAKRTVVSNIHVKGTPAAEAGAHIAHIIKKVLDAKASGQDLKL.

Positions 208 and 229 each coordinate adenosylcob(III)alamin.

The protein belongs to the EutC family. In terms of assembly, the basic unit is a heterodimer which dimerizes to form tetramers. The heterotetramers trimerize; 6 large subunits form a core ring with 6 small subunits projecting outwards. It depends on adenosylcob(III)alamin as a cofactor.

The protein resides in the bacterial microcompartment. It catalyses the reaction ethanolamine = acetaldehyde + NH4(+). It participates in amine and polyamine degradation; ethanolamine degradation. Its function is as follows. Catalyzes the deamination of various vicinal amino-alcohols to oxo compounds. Allows this organism to utilize ethanolamine as the sole source of nitrogen and carbon in the presence of external vitamin B12. This is Ethanolamine ammonia-lyase small subunit from Fusobacterium nucleatum subsp. nucleatum (strain ATCC 25586 / DSM 15643 / BCRC 10681 / CIP 101130 / JCM 8532 / KCTC 2640 / LMG 13131 / VPI 4355).